Here is a 291-residue protein sequence, read N- to C-terminus: Phosphatidylglycerol--prolipoprotein diacylglyceryl transferase (291 aa).

A run of 7 helical transmembrane segments spans residues 21-41, 60-80, 96-116, 130-150, 198-218, 225-245, and 260-280; these read VSLHWYGLMYLVGFVFAMWLA, LLYAGFLGVFLGGRIGYVLFY, WDGGMSFHGGLIGVILVMIIF, FIAPLIPFGLGAGRLGNFING, SQLYELALEGVVLFLILNLFI, GSVSGLFLIGYGLFRIIVEFF, and ISMGQILSIPMVLAGIIMMVW. Arg-143 is an a 1,2-diacyl-sn-glycero-3-phospho-(1'-sn-glycerol) binding site.

This sequence belongs to the Lgt family.

Its subcellular location is the cell inner membrane. It catalyses the reaction L-cysteinyl-[prolipoprotein] + a 1,2-diacyl-sn-glycero-3-phospho-(1'-sn-glycerol) = an S-1,2-diacyl-sn-glyceryl-L-cysteinyl-[prolipoprotein] + sn-glycerol 1-phosphate + H(+). It functions in the pathway protein modification; lipoprotein biosynthesis (diacylglyceryl transfer). Catalyzes the transfer of the diacylglyceryl group from phosphatidylglycerol to the sulfhydryl group of the N-terminal cysteine of a prolipoprotein, the first step in the formation of mature lipoproteins. The polypeptide is Phosphatidylglycerol--prolipoprotein diacylglyceryl transferase (Klebsiella pneumoniae (strain 342)).